The primary structure comprises 1816 residues: Kinesin-like protein KIF1B (1816 aa).

N-acetylserine is present on serine 2. The 350-residue stretch at 5-354 (SVKVAVRVRP…LRYADRAKQI (350 aa)) folds into the Kinesin motor domain. Position 97-104 (97-104 (GQTGAGKS)) interacts with ATP. An interaction with KIFBP region spans residues 270–350 (NINKSLTTLG…TLSTLRYADR (81 aa)). 2 coiled-coil regions span residues 365-386 (NAKLVRELKEEVTRLKDLLRAQ) and 470-502 (GEEAIERLKESEKIIAELNETWEEKLRKTEAIR). Positions 556-612 (TRVGQADAERRQDIVLSGAHIKEEHCLFRSERSNTGEVIVTLEPCERSETYVNGKRV) constitute an FHA domain. Threonine 647 and threonine 652 each carry phosphothreonine. Coiled-coil stretches lie at residues 668 to 737 (EKQG…EEEV) and 841 to 869 (SLDKLKQRLDLMREMYDRAGEVASSAQDD). Phosphoserine occurs at positions 1054, 1057, 1416, 1454, and 1487. The segment at 1522-1571 (VPKSLSDSLSPSLSSGTLSTSTSISSQISTTTFESAITPSESSGYDSADV) is disordered. Over residues 1525–1553 (SLSDSLSPSLSSGTLSTSTSISSQISTTT) the composition is skewed to low complexity. Polar residues predominate over residues 1554-1566 (FESAITPSESSGY). Phosphoserine is present on residues serine 1573, serine 1603, serine 1610, and serine 1613. A compositionally biased stretch (low complexity) spans 1620 to 1637 (SVSSFSSSTLTPSSTCPS). The interval 1620-1659 (SVSSFSSSTLTPSSTCPSLVDSRSSSMDQKTPEANSRASS) is disordered. The segment covering 1640–1659 (DSRSSSMDQKTPEANSRASS) has biased composition (polar residues). Residues 1702–1799 (VSKKGYLHFK…WLYAFNPLLA (98 aa)) enclose the PH domain.

Belongs to the TRAFAC class myosin-kinesin ATPase superfamily. Kinesin family. Unc-104 subfamily. Monomer. Interacts with KIFBP; positively regulates KIF1B microtubule motor activity. Interacts (via C-terminus end of the kinesin-motor domain) with CHP1; the interaction occurs in a calcium-dependent manner. As to quaternary structure, interacts with MADD (via death domain); links this isoform to Rab3-carrying vesicles in anterograde synaptic vesicle transport. Expressed in the brain (at protein level).

The protein resides in the cytoplasm. Its subcellular location is the cytoskeleton. It localises to the cytoplasmic vesicle. The protein localises to the secretory vesicle. It is found in the synaptic vesicle membrane. The protein resides in the mitochondrion. The enzyme catalyses ATP + H2O + a kinesin associated with a microtubule at position (n) = ADP + phosphate a kinesin associated with a microtubule at position (n+1, toward the plus end).. Its function is as follows. Has a plus-end-directed microtubule motor activity and functions as a motor for transport of vesicles and organelles along microtubules. Functionally, has a plus-end-directed microtubule motor activity and functions as a motor for anterograde synaptic vesicle transport along axonal microtubules from the cell body to the presynapse in neuronal cells. Functions as a downstream effector in a developmental apoptotic pathway that is activated when nerve growth factor (NGF) becomes limiting for neuronal progenitor cells. Has a plus-end-directed microtubule motor activity and functions as a motor for anterograde transport of mitochondria. This is Kinesin-like protein KIF1B from Mus musculus (Mouse).